The primary structure comprises 427 residues: Adenylosuccinate synthetase (427 aa).

GTP is bound by residues 12–18 (GDEGKGK) and 40–42 (GHT). Catalysis depends on Asp13, which acts as the Proton acceptor. Mg(2+)-binding residues include Asp13 and Gly40. IMP is bound by residues 13–16 (DEGK), 38–41 (NAGH), Thr126, Arg140, Gln221, Thr236, and Arg299. The Proton donor role is filled by His41. Position 295-301 (295-301 (STTKRPR)) interacts with substrate. Residues Arg301, 327 to 329 (KLD), and 409 to 411 (SVG) each bind GTP.

The protein belongs to the adenylosuccinate synthetase family. In terms of assembly, homodimer. Mg(2+) is required as a cofactor.

It is found in the cytoplasm. It carries out the reaction IMP + L-aspartate + GTP = N(6)-(1,2-dicarboxyethyl)-AMP + GDP + phosphate + 2 H(+). Its pathway is purine metabolism; AMP biosynthesis via de novo pathway; AMP from IMP: step 1/2. Functionally, plays an important role in the de novo pathway of purine nucleotide biosynthesis. Catalyzes the first committed step in the biosynthesis of AMP from IMP. This Borrelia recurrentis (strain A1) protein is Adenylosuccinate synthetase.